The chain runs to 343 residues: Dihydroorotase (343 aa).

Zn(2+)-binding residues include H13 and H15. Residues 15 to 17 and N41 contribute to the substrate site; that span reads HLR. Residues K99, H136, and H174 each contribute to the Zn(2+) site. K99 carries the post-translational modification N6-carboxylysine. H136 is a binding site for substrate. L219 contacts substrate. D247 contacts Zn(2+). D247 is a catalytic residue. The substrate site is built by H251 and A263.

The protein belongs to the metallo-dependent hydrolases superfamily. DHOase family. Class II DHOase subfamily. Homodimer. It depends on Zn(2+) as a cofactor.

The catalysed reaction is (S)-dihydroorotate + H2O = N-carbamoyl-L-aspartate + H(+). The protein operates within pyrimidine metabolism; UMP biosynthesis via de novo pathway; (S)-dihydroorotate from bicarbonate: step 3/3. In terms of biological role, catalyzes the reversible cyclization of carbamoyl aspartate to dihydroorotate. The chain is Dihydroorotase from Shewanella sp. (strain ANA-3).